We begin with the raw amino-acid sequence, 454 residues long: uncharacterized protein (454 aa).

The [4Fe-4S] cluster site is built by Cys-73, Cys-79, Cys-82, and Cys-154. Positions 279, 307, 328, and 381 each coordinate S-adenosyl-L-methionine. Cys-408 serves as the catalytic Nucleophile.

Belongs to the class I-like SAM-binding methyltransferase superfamily. RNA M5U methyltransferase family.

This is an uncharacterized protein from Leptospira interrogans serogroup Icterohaemorrhagiae serovar copenhageni (strain Fiocruz L1-130).